Reading from the N-terminus, the 126-residue chain is Small ribosomal subunit protein uS13 (126 aa).

The interval H92–K126 is disordered.

Belongs to the universal ribosomal protein uS13 family. As to quaternary structure, part of the 30S ribosomal subunit. Forms a loose heterodimer with protein S19. Forms two bridges to the 50S subunit in the 70S ribosome.

Functionally, located at the top of the head of the 30S subunit, it contacts several helices of the 16S rRNA. In the 70S ribosome it contacts the 23S rRNA (bridge B1a) and protein L5 of the 50S subunit (bridge B1b), connecting the 2 subunits; these bridges are implicated in subunit movement. Contacts the tRNAs in the A and P-sites. This is Small ribosomal subunit protein uS13 from Deinococcus geothermalis (strain DSM 11300 / CIP 105573 / AG-3a).